We begin with the raw amino-acid sequence, 207 residues long: Partner of Y14 and mago (207 aa).

2 disordered regions span residues 1–28 and 52–133; these read MSTY…KARR and QRQA…NSIS. The stretch at 64-91 forms a coiled coil; that stretch reads LLAAESKKEREKQERTRAKKQEKESGRQ. Basic and acidic residues predominate over residues 68 to 90; sequence ESKKEREKQERTRAKKQEKESGR. Residues 123–133 show a composition bias toward polar residues; that stretch reads PSGSRDINSIS. Residues 152-184 adopt a coiled-coil conformation; it reads AKQLKKLRKKIREIEQIESRIQAGEQKKLDKDQ.

Belongs to the pym family. In terms of assembly, interacts (via N-terminus) with mago and tsu/RBM8A; the interaction is direct. In terms of tissue distribution, expression detected in the ovary. In the oocyte expressed in the germarium, nurse cell and follicle cell.

Its subcellular location is the cytoplasm. The protein localises to the nucleus. Regulator of the exon junction complex (EJC), a multiprotein complex that associates immediately upstream of the exon-exon junction on mRNAs and serves as a positional landmark for the intron exon structure of genes and directs post-transcriptional processes in the cytoplasm such as mRNA export, nonsense-mediated mRNA decay (NMD) or translation. Acts as an EJC disassembly factor by disrupting mature EJC from spliced mRNAs. Required for normal localization of osk mRNA to the posterior pole of the developing oocyte. Does not interact with the small ribosomal unit or components of the translation initiation complex. May not function in cap-dependent translation regulation. The polypeptide is Partner of Y14 and mago (Drosophila melanogaster (Fruit fly)).